A 403-amino-acid chain; its full sequence is Phosphopentomutase (403 aa).

Residues Asp-13, Asp-298, His-303, Asp-339, His-340, and His-351 each coordinate Mn(2+).

Belongs to the phosphopentomutase family. Mn(2+) serves as cofactor.

It is found in the cytoplasm. The enzyme catalyses 2-deoxy-alpha-D-ribose 1-phosphate = 2-deoxy-D-ribose 5-phosphate. The catalysed reaction is alpha-D-ribose 1-phosphate = D-ribose 5-phosphate. It participates in carbohydrate degradation; 2-deoxy-D-ribose 1-phosphate degradation; D-glyceraldehyde 3-phosphate and acetaldehyde from 2-deoxy-alpha-D-ribose 1-phosphate: step 1/2. Isomerase that catalyzes the conversion of deoxy-ribose 1-phosphate (dRib-1-P) and ribose 1-phosphate (Rib-1-P) to deoxy-ribose 5-phosphate (dRib-5-P) and ribose 5-phosphate (Rib-5-P), respectively. This Streptococcus thermophilus (strain ATCC BAA-491 / LMD-9) protein is Phosphopentomutase.